The sequence spans 423 residues: MGDVAVETPANNVTPLTKAAPLDTIPNIDSLEGTGNDGSDEYATLKRLQRHLEYIQLQEEYIKDEQRSLKRELVRAQEEIKRIQSVPLVIGQFMEAIDQNTGIVQSSTGSNYVVRILSTLDREKLKPSSSVALHRHSNALVDILPPEADSSIAMLGENEKPDVTYADVGGLDMQKQEIREAVELPLTQFDLYKQIGIDPPRGVLLYGPPGTGKTMLVKAVANSTTASFIRVNGSEFVQKYLGEGPRMVRDVFRMARENSPAIIFIDEIDAIATKRFDAQTGADREVQRILLELLNQMDGFEQSSNVKVIMATNRADTLDPALLRPGRLDRKIEFPSLRDRRERRLIFSTIASKMSLSPEVDLDSLIVRNEPLSGAVIAAIMQEAGLRAVRKNRYNIIPRSDLEDAYAAQVKTGQEADRLEFYR.

207–214 (GPPGTGKT) serves as a coordination point for ATP.

The protein belongs to the AAA ATPase family.

Its subcellular location is the cytoplasm. It localises to the nucleus. Functionally, the 26S proteasome is involved in the ATP-dependent degradation of ubiquitinated proteins. The regulatory (or ATPase) complex confers ATP dependency and substrate specificity to the 26S complex. The polypeptide is 26S proteasome regulatory subunit 6B homolog (tbpA) (Aspergillus niger).